The primary structure comprises 384 residues: Putative glutamate--cysteine ligase 2-1 (384 aa).

The protein belongs to the glutamate--cysteine ligase type 2 family. YbdK subfamily.

It catalyses the reaction L-cysteine + L-glutamate + ATP = gamma-L-glutamyl-L-cysteine + ADP + phosphate + H(+). In terms of biological role, ATP-dependent carboxylate-amine ligase which exhibits weak glutamate--cysteine ligase activity. The chain is Putative glutamate--cysteine ligase 2-1 from Paenarthrobacter aurescens (strain TC1).